A 250-amino-acid chain; its full sequence is 5-oxoprolinase subunit A (250 aa).

Belongs to the LamB/PxpA family. Forms a complex composed of PxpA, PxpB and PxpC.

The catalysed reaction is 5-oxo-L-proline + ATP + 2 H2O = L-glutamate + ADP + phosphate + H(+). Its function is as follows. Catalyzes the cleavage of 5-oxoproline to form L-glutamate coupled to the hydrolysis of ATP to ADP and inorganic phosphate. This is 5-oxoprolinase subunit A from Streptomyces avermitilis (strain ATCC 31267 / DSM 46492 / JCM 5070 / NBRC 14893 / NCIMB 12804 / NRRL 8165 / MA-4680).